The sequence spans 239 residues: Dephospho-CoA kinase (239 aa).

The DPCK domain maps to 3–206 (IIGLTGSIAS…GGEGGEPAAG (204 aa)). Residue 11-16 (ASGKST) participates in ATP binding. Positions 197–239 (GGEGGEPAAGSSAHHGAGSVDPGAGPCDGPGAAPEAERRGGDR) are disordered. Positions 204–230 (AAGSSAHHGAGSVDPGAGPCDGPGAAP) are enriched in low complexity.

The protein belongs to the CoaE family.

It is found in the cytoplasm. It catalyses the reaction 3'-dephospho-CoA + ATP = ADP + CoA + H(+). It functions in the pathway cofactor biosynthesis; coenzyme A biosynthesis; CoA from (R)-pantothenate: step 5/5. Its function is as follows. Catalyzes the phosphorylation of the 3'-hydroxyl group of dephosphocoenzyme A to form coenzyme A. This Symbiobacterium thermophilum (strain DSM 24528 / JCM 14929 / IAM 14863 / T) protein is Dephospho-CoA kinase.